A 299-amino-acid chain; its full sequence is Regucalcin (299 aa).

An a divalent metal cation-binding site is contributed by Glu-18. Substrate is bound by residues Arg-101, Asn-103, and Glu-121. 2 residues coordinate a divalent metal cation: Asn-154 and Asp-204. The Proton donor/acceptor role is filled by Asp-204. An N6-succinyllysine mark is found at Lys-244 and Lys-253.

It belongs to the SMP-30/CGR1 family. In terms of assembly, monomer. Requires Zn(2+) as cofactor. Mn(2+) is required as a cofactor. Ca(2+) serves as cofactor. It depends on Mg(2+) as a cofactor.

Its subcellular location is the cytoplasm. The enzyme catalyses D-glucono-1,5-lactone + H2O = D-gluconate + H(+). Its pathway is cofactor biosynthesis; L-ascorbate biosynthesis via UDP-alpha-D-glucuronate pathway; L-ascorbate from UDP-alpha-D-glucuronate: step 3/4. In terms of biological role, gluconolactonase with low activity towards other sugar lactones, including gulonolactone and galactonolactone. Catalyzes a key step in ascorbic acid (vitamin C) biosynthesis. Can also hydrolyze diisopropyl phosphorofluoridate and phenylacetate (in vitro). Calcium-binding protein. Modulates Ca(2+) signaling, and Ca(2+)-dependent cellular processes and enzyme activities. This is Regucalcin (RGN) from Sus scrofa (Pig).